A 350-amino-acid chain; its full sequence is Galactokinase (350 aa).

14–17 (EHTD) contributes to the substrate binding site. ATP contacts are provided by residues Ser-46 and 96–102 (GAGLSSS). Ser-102 and Glu-134 together coordinate Mg(2+). Asp-146 (proton acceptor) is an active-site residue. Tyr-196 is a substrate binding site.

Belongs to the GHMP kinase family. GalK subfamily.

The protein resides in the cytoplasm. The enzyme catalyses alpha-D-galactose + ATP = alpha-D-galactose 1-phosphate + ADP + H(+). Its pathway is carbohydrate metabolism; galactose metabolism. In terms of biological role, catalyzes the transfer of the gamma-phosphate of ATP to D-galactose to form alpha-D-galactose-1-phosphate (Gal-1-P). The sequence is that of Galactokinase from Thermotoga neapolitana.